The sequence spans 634 residues: Ankyrin repeat and SOCS box protein 2 (634 aa).

Residues 26-45 (SEEELLQMAIEQSLADKTRG) form the UIM domain. Positions 36 to 82 (EQSLADKTRGPTPAEASASSQTNHQPGHFHPWTRSPSSPENPPARAP) are disordered. 12 ANK repeats span residues 104 to 133 (AAMD…NLAE), 137 to 167 (EGWL…TIDQ), 171 to 200 (QEET…EPDI), 204 to 233 (SRET…DANH), 237 to 266 (RGWT…KVEA), 270 to 299 (YSIT…DINT), 303 to 332 (DSAS…DANK), 336 to 365 (DGLL…RTRV), 368 to 397 (SGIS…DVNA), 410 to 439 (RRSS…DPNR), 440 to 469 (DVIS…NIDA), and 476 to 504 (TAFP…DGEP). Serine 371 bears the Phosphoserine mark. One can recognise an SOCS box domain in the interval 580–634 (EDWAVIKEKAEPPRPLAHLCRLRVRKAIGKYRIKLLDTLPLPGRLIRYLKYENTQ).

This sequence belongs to the ankyrin SOCS box (ASB) family. As to quaternary structure, component of a probable ECS E3 ubiquitin-protein ligase complex which contains CUL5, either RBX1 or RNF7/RBX2, Elongin BC complex (ELOB and ELOC) and ASB2. Interacts with SKP2. Through its interaction with SKP2, likely to bridge the formation of dimeric E3-ubiquitin-protein ligase complexes composed of an ECS complex and an SCF(SKP2) complex. Interacts with JAK2; the interaction targets JAK2 for Notch-mediated proteasomal degradation. Interacts with TCF3/E2A; the interaction is mediated by SKP2 and targets TCF3 for Notch-mediated proteasomal degradation. Interacts with DES. In terms of processing, monoubiquitinated. Not monoubiquitinated. Post-translationally, phosphorylation at Ser-371 is required for association with FLNA and subsequent FLNA degradation. Highest expression in muscle, heart and spleen. Highly expressed in cells of the first and second heart fields in the developing embryonic heart. At 9.5 dpc, robust expression predominantly in the left and right ventricles (RV) and to a lower extent in inflow and outflow tracts. At 10.5 and 11.5 dpc, expression is restricted to the myocardium with no expression observed in the endocardium. In terms of tissue distribution, not expressed in immature dendritic cells. Highly expressed in adult skeletal muscle with very low levels in adult bone marrow. As to expression, expressed in immature dendritic cells and in primary dendritic cells derived from the spleen. Highly expressed in adult bone marrow with negligible levels in adult skeletal muscle. Expressed at higher levels in T helper type 2 (Th2) cells than in regulatory T (Treg) cells, type 1 helper T (Th1) cells and T helper 17 (Th17) cells.

Its subcellular location is the cytoplasm. It is found in the cytoskeleton. The protein resides in the stress fiber. It localises to the myofibril. The protein localises to the sarcomere. Its subcellular location is the z line. It functions in the pathway protein modification; protein ubiquitination. Substrate-recognition component of a SCF-like ECS (Elongin-Cullin-SOCS-box protein) E3 ubiquitin-protein ligase complex which mediates the ubiquitination and subsequent proteasomal degradation of target proteins. Mediates Notch-induced ubiquitination and degradation of substrates including TCF3/E2A and JAK2. Required during embryonic heart development for complete heart looping. Required for cardiomyocyte differentiation. Specifically promotes the ubiquitination of SMAD9 and targets it for proteasomal degradation, leading to avoid excessive accumulation of SMAD9. Plays a role in the regulation of NK-cell migration by modulating protein levels of filamin A/FLNA via regulation of its ubiquitination and proteasome degradation. Its function is as follows. Involved in myogenic differentiation and targets filamin FLNB for proteasomal degradation but not filamin FLNA. Also targets DES for proteasomal degradation. Acts as a negative regulator of skeletal muscle mass. In terms of biological role, targets filamins FLNA and FLNB for proteasomal degradation. This leads to enhanced adhesion of hematopoietic cells to fibronectin. Required for FLNA degradation in immature cardiomyocytes which is necessary for actin cytoskeleton remodeling, leading to proper organization of myofibrils and function of mature cardiomyocytes. Required for degradation of FLNA and FLNB in immature dendritic cells (DC) which enhances immature DC migration by promoting DC podosome formation and DC-mediated degradation of the extracellular matrix. Does not promote proteasomal degradation of tyrosine-protein kinases JAK1 or JAK2 in hematopoietic cells. This is Ankyrin repeat and SOCS box protein 2 from Mus musculus (Mouse).